We begin with the raw amino-acid sequence, 494 residues long: Tripartite motif-containing protein 5 (494 aa).

Residue alanine 2 is modified to N-acetylalanine. The RING-type zinc finger occupies 15–59 (CPICLELLTEPLSLDCGHSFCQACITANHKKSMLHQGERSCPLCR). A Phosphoserine modification is found at serine 86. The B box-type zinc finger occupies 91-132 (QKVDHCARHGEKLLLFCQQDGNVICWLCERSQEHRGHHTLLV). Positions 96, 99, 118, and 124 each coordinate Zn(2+). Positions 132-222 (VEEVAQTYRE…KRLTQSENDM (91 aa)) form a coiled coil. Residues 186–199 (FKQLRDILDCEESN) are required for interaction with GABARAP and for autophagy. Residues 280-494 (PDLKGMLQVF…LPMTLCSPRS (215 aa)) enclose the B30.2/SPRY domain.

The protein belongs to the TRIM/RBCC family. In terms of assembly, can form homodimers and homotrimers. In addition to lower-order dimerization, also exhibits a higher-order multimerization and both low- and high-order multimerizations are essential for its restriction activity. Interacts with BTBD1 and BTBD2. Interacts with PSMC4, PSMC5, PSMD7 and HSPA8/HSC70. Interacts (via B30.2/SPRY domain) with HSPA1A/B. Interacts with PSMC2, MAP3K7/TAK1, TAB2 and TAB3. Interacts with SQSTM1. Interacts with TRIM6 and TRIM34. Interacts with ULK1 (phosphorylated form), GABARAP, GABARAPL1, GABARAPL2, MAP1LC3A, MAP1LC3C and BECN1. In terms of processing, degraded in a proteasome-independent fashion in the absence of viral infection but in a proteasome-dependent fashion following exposure to restriction sensitive virus. Autoubiquitinated in a RING finger- and UBE2D2-dependent manner. Monoubiquitinated by TRIM21. Deubiquitinated by Yersinia YopJ. Ubiquitination may not lead to proteasomal degradation.

Its subcellular location is the cytoplasm. The protein resides in the nucleus. The enzyme catalyses S-ubiquitinyl-[E2 ubiquitin-conjugating enzyme]-L-cysteine + [acceptor protein]-L-lysine = [E2 ubiquitin-conjugating enzyme]-L-cysteine + N(6)-ubiquitinyl-[acceptor protein]-L-lysine.. It functions in the pathway protein modification; protein ubiquitination. In terms of biological role, capsid-specific restriction factor that prevents infection from non-host-adapted retroviruses. Blocks viral replication early in the life cycle, after viral entry but before reverse transcription. In addition to acting as a capsid-specific restriction factor, also acts as a pattern recognition receptor that activates innate immune signaling in response to the retroviral capsid lattice. Binding to the viral capsid triggers its E3 ubiquitin ligase activity, and in concert with the heterodimeric ubiquitin conjugating enzyme complex UBE2V1-UBE2N (also known as UBC13-UEV1A complex) generates 'Lys-63'-linked polyubiquitin chains, which in turn are catalysts in the autophosphorylation of the MAP3K7/TAK1 complex (includes TAK1, TAB2, and TAB3). Activation of the MAP3K7/TAK1 complex by autophosphorylation results in the induction and expression of NF-kappa-B and MAPK-responsive inflammatory genes, thereby leading to an innate immune response in the infected cell. Plays a role in regulating autophagy through activation of autophagy regulator BECN1 by causing its dissociation from its inhibitors BCL2 and TAB2. The chain is Tripartite motif-containing protein 5 (TRIM5) from Pithecia pithecia (White-faced saki).